The sequence spans 219 residues: Trafficking protein particle complex subunit 4 (219 aa).

This sequence belongs to the TRAPP small subunits family. TRAPPC4 subfamily. In terms of assembly, component of the multisubunit TRAPP (transport protein particle) complex, which includes at least TRAPPC2, TRAPPC2L, TRAPPC3, TRAPPC3L, TRAPPC4, TRAPPC5, TRAPPC8, TRAPPC9, TRAPPC10, TRAPPC11 and TRAPPC12. Interacts with SDC2. As to expression, widely expressed.

The protein resides in the postsynaptic cell membrane. Its subcellular location is the golgi apparatus membrane. It localises to the endoplasmic reticulum. The protein localises to the vesicle. In terms of biological role, core component of the TRAPP complexes which has a function of guanine nucleotide exchange factor activity for Rab1 GTPase. Plays a role in vesicular transport from endoplasmic reticulum to Golgi and autophagy. May play a role in dendrite postsynaptic membrane trafficking. The polypeptide is Trafficking protein particle complex subunit 4 (Mus musculus (Mouse)).